A 276-amino-acid polypeptide reads, in one-letter code: Digeranylgeranylglyceryl phosphate synthase (276 aa).

Transmembrane regions (helical) follow at residues 14-34 (VNTL…GGAV), 90-110 (VVLF…AVCI), 144-164 (FVFG…AALA), 200-220 (ALAV…VPYL), and 221-241 (VGVF…VMVV).

It belongs to the UbiA prenyltransferase family. DGGGP synthase subfamily. It depends on Mg(2+) as a cofactor.

The protein localises to the cell membrane. It catalyses the reaction sn-3-O-(geranylgeranyl)glycerol 1-phosphate + (2E,6E,10E)-geranylgeranyl diphosphate = 2,3-bis-O-(geranylgeranyl)-sn-glycerol 1-phosphate + diphosphate. It participates in membrane lipid metabolism; glycerophospholipid metabolism. Prenyltransferase that catalyzes the transfer of the geranylgeranyl moiety of geranylgeranyl diphosphate (GGPP) to the C2 hydroxyl of (S)-3-O-geranylgeranylglyceryl phosphate (GGGP). This reaction is the second ether-bond-formation step in the biosynthesis of archaeal membrane lipids. In Halobacterium salinarum (strain ATCC 29341 / DSM 671 / R1), this protein is Digeranylgeranylglyceryl phosphate synthase.